Here is a 463-residue protein sequence, read N- to C-terminus: Phosphomannomutase/phosphoglucomutase (463 aa).

Tyrosine 17 lines the alpha-D-glucose 1-phosphate pocket. Tyrosine 17 is a binding site for alpha-D-mannose 1-phosphate. Serine 108 acts as the Non-phosphorylated intermediate in catalysis. Residues serine 108, aspartate 242, aspartate 244, and aspartate 246 each coordinate Mg(2+). The residue at position 108 (serine 108) is a Phosphoserine. Residues lysine 285, histidine 308, 325-329, and 421-425 contribute to the alpha-D-glucose 1-phosphate site; these read EMSGH and RASNT. Alpha-D-mannose 1-phosphate is bound by residues histidine 308, 325–329, and 421–425; these read EMSGH and RASNT.

It belongs to the phosphohexose mutase family. As to quaternary structure, monomer. Mg(2+) serves as cofactor.

The catalysed reaction is alpha-D-mannose 1-phosphate = D-mannose 6-phosphate. It catalyses the reaction alpha-D-glucose 1-phosphate = alpha-D-glucose 6-phosphate. It functions in the pathway nucleotide-sugar biosynthesis; GDP-alpha-D-mannose biosynthesis; alpha-D-mannose 1-phosphate from D-fructose 6-phosphate: step 2/2. The protein operates within bacterial outer membrane biogenesis; lipopolysaccharide biosynthesis. Its function is as follows. Highly reversible phosphoryltransferase. The phosphomannomutase activity produces a precursor for alginate polymerization, the alginate layer causes a mucoid phenotype and provides a protective barrier against host immune defenses and antibiotics. Also involved in core lipopolysaccaride (LPS) biosynthesis due to its phosphoglucomutase activity. Essential for rhamnolipid production, an exoproduct correlated with pathogenicity. Required for biofilm production. The reaction proceeds via 2 processive phosphoryl transferase reactions; first from enzyme-phospho-Ser-108 to the substrate (generating a bisphosphorylated substrate intermediate and a dephosphorylated enzyme), a 180 degree rotation of the intermediate (probably aided by movement of domain 4), and subsequent transfer of phosphate back to the enzyme. The sequence is that of Phosphomannomutase/phosphoglucomutase (algC) from Pseudomonas aeruginosa (strain UCBPP-PA14).